The chain runs to 127 residues: Protein MGF 110-14L (127 aa).

The N-terminal stretch at 1-17 is a signal peptide; the sequence is MKVLLELLLGYSVHILA.

It belongs to the asfivirus MGF 110 family.

In terms of biological role, plays a role in virus cell tropism, and may be required for efficient virus replication in macrophages. The sequence is that of Protein MGF 110-14L from Ornithodoros (relapsing fever ticks).